The primary structure comprises 45 residues: Cytochrome b559 subunit beta (45 aa).

A helical membrane pass occupies residues 20–36; it reads WIAVHTLAVPTVFFLGA. Heme is bound at residue histidine 24.

This sequence belongs to the PsbE/PsbF family. Heterodimer of an alpha subunit and a beta subunit. PSII is composed of 1 copy each of membrane proteins PsbA, PsbB, PsbC, PsbD, PsbE, PsbF, PsbH, PsbI, PsbJ, PsbK, PsbL, PsbM, PsbT, PsbX, PsbY, PsbZ, Psb30/Ycf12, peripheral proteins PsbO, CyanoQ (PsbQ), PsbU, PsbV and a large number of cofactors. It forms dimeric complexes. Requires heme b as cofactor.

It is found in the cellular thylakoid membrane. In terms of biological role, this b-type cytochrome is tightly associated with the reaction center of photosystem II (PSII). PSII is a light-driven water:plastoquinone oxidoreductase that uses light energy to abstract electrons from H(2)O, generating O(2) and a proton gradient subsequently used for ATP formation. It consists of a core antenna complex that captures photons, and an electron transfer chain that converts photonic excitation into a charge separation. The protein is Cytochrome b559 subunit beta of Nostoc sp. (strain PCC 7120 / SAG 25.82 / UTEX 2576).